The chain runs to 214 residues: Protein DMP6 (214 aa).

Helical transmembrane passes span 52–72 (LANL…PICT), 83–103 (FMTA…SFTD), 143–163 (FIDF…VLFD), and 178–198 (VVEL…MVFA).

This sequence belongs to the plant DMP1 protein family. Expressed constitutively in leaves, stems, flowers, siliques and roots (e.g. root hairs).

The protein localises to the vacuole membrane. Functionally, involved in membrane remodeling. The sequence is that of Protein DMP6 from Arabidopsis thaliana (Mouse-ear cress).